The chain runs to 328 residues: DNA-directed RNA polymerase subunit alpha (328 aa).

The interval 1–231 (MIQQMQMPEK…DHVRLFSLFS (231 aa)) is alpha N-terminal domain (alpha-NTD). Residues 252 to 328 (MRKLLMTRIE…MEVTKYRLNQ (77 aa)) form an alpha C-terminal domain (alpha-CTD) region.

It belongs to the RNA polymerase alpha chain family. Homodimer. The RNAP catalytic core consists of 2 alpha, 1 beta, 1 beta' and 1 omega subunit. When a sigma factor is associated with the core the holoenzyme is formed, which can initiate transcription.

It carries out the reaction RNA(n) + a ribonucleoside 5'-triphosphate = RNA(n+1) + diphosphate. DNA-dependent RNA polymerase catalyzes the transcription of DNA into RNA using the four ribonucleoside triphosphates as substrates. In Chloroherpeton thalassium (strain ATCC 35110 / GB-78), this protein is DNA-directed RNA polymerase subunit alpha.